The following is a 331-amino-acid chain: Ferrochelatase (331 aa).

Residues His187 and Glu286 each coordinate Fe cation.

This sequence belongs to the ferrochelatase family.

It localises to the cytoplasm. It catalyses the reaction heme b + 2 H(+) = protoporphyrin IX + Fe(2+). It participates in porphyrin-containing compound metabolism; protoheme biosynthesis; protoheme from protoporphyrin-IX: step 1/1. Catalyzes the ferrous insertion into protoporphyrin IX. This chain is Ferrochelatase, found in Legionella pneumophila subsp. pneumophila (strain Philadelphia 1 / ATCC 33152 / DSM 7513).